Consider the following 901-residue polypeptide: Alanine--tRNA ligase (901 aa).

Zn(2+) contacts are provided by His600, His604, Cys704, and His708.

Belongs to the class-II aminoacyl-tRNA synthetase family. It depends on Zn(2+) as a cofactor.

It is found in the cytoplasm. The enzyme catalyses tRNA(Ala) + L-alanine + ATP = L-alanyl-tRNA(Ala) + AMP + diphosphate. Its function is as follows. Catalyzes the attachment of alanine to tRNA(Ala) in a two-step reaction: alanine is first activated by ATP to form Ala-AMP and then transferred to the acceptor end of tRNA(Ala). Also edits incorrectly charged Ser-tRNA(Ala) and Gly-tRNA(Ala) via its editing domain. In Ignicoccus hospitalis (strain KIN4/I / DSM 18386 / JCM 14125), this protein is Alanine--tRNA ligase.